The sequence spans 567 residues: uncharacterized protein (567 aa).

Positions 1–26 (MPSEKATTRHLPGAVETLSPRTGRRP) are disordered. 6 helical membrane passes run 57-77 (AILVTNVIGLIVGAMLLTVAF), 90-110 (VSFGIVPGYCVLAFILGTYWL), 142-162 (VALAVLFLWGAAAALWTIIYG), 173-193 (LFSMGVIGVVAATSCYLLTEF), 221-241 (MLVWLLCSGVPNVGVALTAIF), and 257-277 (VLILWAPLLIFGFILMWILAW). Residues 277-329 (WLTATPVRVVREALNRVEQGDLSGDLVVFDGTELGELQRGFNRMVEGLRERER) form the HAMP domain. The 125-residue stretch at 361-485 (AVVFVDIVGS…EPVNEAARLC (125 aa)) folds into the Guanylate cyclase domain.

It belongs to the adenylyl cyclase class-3 family.

It is found in the cell membrane. This is an uncharacterized protein from Mycobacterium bovis (strain ATCC BAA-935 / AF2122/97).